The chain runs to 105 residues: Endogenous retrovirus group K member 104 Rec protein (105 aa).

The disordered stretch occupies residues 1–43 (MNPSEMQRKAPPRRRRHCNRAPLTHKMNKMVTSEEEMKLPSTK). Positions 10 to 19 (APPRRRRHCN) are enriched in basic residues. The short motif at 13-20 (RRRRHCNR) is the Nuclear localization signal element. Residues 50 to 59 (WAQLKKLTQL) carry the Nuclear export signal motif.

In terms of assembly, forms homodimers, homotrimers, and homotetramers via a C-terminal domain. Associates with XPO1 and with ZNF145.

It is found in the cytoplasm. It localises to the nucleus. The protein resides in the nucleolus. Functionally, retroviral replication requires the nuclear export and translation of unspliced, singly-spliced and multiply-spliced derivatives of the initial genomic transcript. Rec interacts with a highly structured RNA element (RcRE) present in the viral 3'LTR and recruits the cellular nuclear export machinery. This permits export to the cytoplasm of unspliced genomic or incompletely spliced subgenomic viral transcripts. The protein is Endogenous retrovirus group K member 104 Rec protein (HERV-K104) of Homo sapiens (Human).